Reading from the N-terminus, the 482-residue chain is O-acyltransferase ausP (482 aa).

Residues His180 and Asp412 each act as proton acceptor in the active site.

The protein belongs to the plant acyltransferase family. As to quaternary structure, monomer.

It functions in the pathway secondary metabolite biosynthesis; terpenoid biosynthesis. Its function is as follows. O-acyltransferase; part of the gene cluster B that mediates the biosynthesis of the fungal meroterpenoid acetoxydehydroaustin. The first step of the pathway is the synthesis of 3,5-dimethylorsellinic acid by the polyketide synthase ausA. 3,5-dimethylorsellinic acid is then prenylated by the polyprenyl transferase ausN. Further epoxidation by the FAD-dependent monooxygenase ausM and cyclization by the probable terpene cyclase ausL lead to the formation of protoaustinoid A. Protoaustinoid A is then oxidized to spiro-lactone preaustinoid A3 by the combined action of the FAD-binding monooxygenases ausB and ausC, and the dioxygenase ausE. Acid-catalyzed keto-rearrangement and ring contraction of the tetraketide portion of preaustinoid A3 by ausJ lead to the formation of preaustinoid A4. The aldo-keto reductase ausK, with the help of ausH, is involved in the next step by transforming preaustinoid A4 into isoaustinone which is in turn hydroxylated by the P450 monooxygenase ausI to form austinolide. The cytochrome P450 monooxygenase ausG then modifies austinolide to austinol. Austinol is further acetylated to austin by the O-acetyltransferase ausP, which spontaneously changes to dehydroaustin. The cytochrome P450 monooxygenase then converts dehydroaustin is into 7-dehydrodehydroaustin. The hydroxylation catalyzed by ausR permits the second O-acetyltransferase ausQ to add an additional acetyl group to the molecule, leading to the formation of acetoxydehydroaustin. Due to genetic rearrangements of the clusters and the subsequent loss of some enzymes, the end product of the Penicillium brasilianum austinoid biosynthesis clusters is acetoxydehydroaustin. The polypeptide is O-acyltransferase ausP (Penicillium brasilianum).